A 424-amino-acid polypeptide reads, in one-letter code: S-phase kinase-associated protein 2 (424 aa).

The tract at residues M1 to D220 is mediates interaction with hepatitis C virus non-structural protein NS5A. A disordered region spans residues S39 to K73. S64 bears the Phosphoserine mark. A Nuclear localization signal motif is present at residues R67–K73. N6-acetyllysine; by p300/EP300 is present on residues K68 and K71. 2 positions are modified to phosphoserine: S72 and S75. The 47-residue stretch at G94–L140 folds into the F-box domain. 10 LRR repeats span residues V151–E176, H177–Q204, N210–R234, L235–R257, L258–T284, T286–R308, C309–E330, L334–L356, I359–L378, and K380–I401. S179 is modified (phosphoserine). Residues G402 to L424 form a mediates interaction with IFI27 region.

In terms of assembly, part of a SCF(SKP2) complex consisting of CUL1, RBX1, SKP1 and SKP2. Component of a SCF(SKP2)-like complex containing CUL1, SKP1, TRIM21 and SKP2. Interacts directly with CUL1 and SKP1. Interacts with CKS1. Interacts with ASB2 which is the substrate-recognition component of a probable ECS E3 ubiquitin-protein ligase complex; ASB2 is likely to bridge the formation of dimeric E3-ubiquitin-protein ligase complexes composed of an ECS complex and an SCF(SKP2) complex. Interacts with the cyclin-A-CDK2 complex. Interacts with ORC1, phosphorylated CDT1, phosphorylated RBL2, ELF4, phosphorylated RAG2, FOXO1, UBP43, MYC, TOB1, TAL1 and KMT2A/MLL1. Interacts with TRIM21. Interacts with cyclin-E. Interacts with IFI27; promotes the ubiquitin-mediated proteasomal degradation of hepatitis C virus/HCV non-structural protein NS5A. Interacts with CARM1. As to quaternary structure, (Microbial infection) Interacts with hepatitis C virus/HCV non-structural protein NS5A; promotes the ubiquitin-mediated proteasomal degradation of NS5A. In terms of processing, phosphorylated on serine and threonine resudues in response to DNA damage, promoting 'Lys-63'-linked ubiquitination of NBN. Ubiquitinated by the APC/C complex, leading to its degradation by the proteasome. Deubiquitinated by USP13. Post-translationally, acetylation at Lys-68 and Lys-71 increases stability through impairment of APC/C-mediated proteolysis and promotes cytoplasmic retention. Deacetylated by SIRT3.

It is found in the cytoplasm. It localises to the nucleus. Its pathway is protein modification; protein ubiquitination. In terms of biological role, substrate recognition component of a SCF (SKP1-CUL1-F-box protein) E3 ubiquitin-protein ligase complex which mediates the ubiquitination and subsequent proteasomal degradation of target proteins involved in cell cycle progression, signal transduction and transcription. Specifically recognizes phosphorylated CDKN1B/p27kip and is involved in regulation of G1/S transition. Degradation of CDKN1B/p27kip also requires CKS1. Recognizes target proteins ORC1, CDT1, RBL2, KMT2A/MLL1, CDK9, RAG2, NBN, FOXO1, UBP43, YTHDF2, and probably MYC, TOB1 and TAL1. Degradation of TAL1 also requires STUB1. Recognizes CDKN1A in association with CCNE1 or CCNE2 and CDK2. Promotes ubiquitination and destruction of CDH1 in a CK1-dependent manner, thereby regulating cell migration. Following phosphorylation in response to DNA damage, mediates 'Lys-63'-linked ubiquitination of NBN, promoting ATM recruitment to DNA damage sites and DNA repair via homologous recombination. Functionally, through the ubiquitin-mediated proteasomal degradation of hepatitis C virus non-structural protein 5A, has an antiviral activity towards that virus. The protein is S-phase kinase-associated protein 2 (SKP2) of Homo sapiens (Human).